The sequence spans 101 residues: Small ribosomal subunit protein uS10 (101 aa).

It belongs to the universal ribosomal protein uS10 family. In terms of assembly, part of the 30S ribosomal subunit.

Involved in the binding of tRNA to the ribosomes. This Porphyromonas gingivalis (strain ATCC 33277 / DSM 20709 / CIP 103683 / JCM 12257 / NCTC 11834 / 2561) protein is Small ribosomal subunit protein uS10.